The following is a 268-amino-acid chain: Riboflavin transport system permease protein RibX (268 aa).

Helical transmembrane passes span Ala24–Leu44, Leu76–Leu96, Ala119–Ser139, Lys140–Ile160, Val185–Ala205, and Leu236–Gly256. The region spanning Thr75–Ala255 is the ABC transmembrane type-1 domain.

This sequence belongs to the binding-protein-dependent transport system permease family. The complex is likely composed of an ATP-binding protein, a transmembrane protein (RibX) and a solute-binding protein (RibY).

It localises to the cell membrane. In terms of biological role, part of an ABC transporter complex that transports riboflavin into the cell. In Chloroflexus aurantiacus (strain ATCC 29366 / DSM 635 / J-10-fl), this protein is Riboflavin transport system permease protein RibX.